We begin with the raw amino-acid sequence, 194 residues long: Potassium-transporting ATPase KdpC subunit (194 aa).

Residues 12–34 (LFLLLLTGGVYPLLTTALGQWWF) traverse the membrane as a helical segment.

The protein belongs to the KdpC family. As to quaternary structure, the system is composed of three essential subunits: KdpA, KdpB and KdpC.

The protein localises to the cell inner membrane. In terms of biological role, part of the high-affinity ATP-driven potassium transport (or Kdp) system, which catalyzes the hydrolysis of ATP coupled with the electrogenic transport of potassium into the cytoplasm. This subunit acts as a catalytic chaperone that increases the ATP-binding affinity of the ATP-hydrolyzing subunit KdpB by the formation of a transient KdpB/KdpC/ATP ternary complex. This Salmonella enteritidis PT4 (strain P125109) protein is Potassium-transporting ATPase KdpC subunit.